The chain runs to 484 residues: Mitogen-activated protein kinase SLT2/MPK1 (484 aa).

The 296-residue stretch at 23–318 (FQLIKEIGHG…VDEALEHPYL (296 aa)) folds into the Protein kinase domain. ATP is bound by residues 29 to 37 (IGHGAYGIV) and K54. D153 functions as the Proton acceptor in the catalytic mechanism. T190 carries the post-translational modification Phosphothreonine. Positions 190 to 192 (TEY) match the TXY motif. Y192 bears the Phosphotyrosine mark. A compositionally biased stretch (low complexity) spans 383 to 392 (QQQQQQQQQP). 2 disordered regions span residues 383-403 (QQQQ…AAAS) and 426-464 (IHSQ…PQND).

This sequence belongs to the protein kinase superfamily. CMGC Ser/Thr protein kinase family. MAP kinase subfamily. In terms of assembly, interacts with RLM1. The cofactor is Mg(2+). Post-translationally, dually phosphorylated on Thr-190 and Tyr-192, which activates the enzyme.

The enzyme catalyses L-seryl-[protein] + ATP = O-phospho-L-seryl-[protein] + ADP + H(+). It catalyses the reaction L-threonyl-[protein] + ATP = O-phospho-L-threonyl-[protein] + ADP + H(+). With respect to regulation, activated by tyrosine and threonine phosphorylation by MKK1 and MKK2. Its function is as follows. Serine/threonine protein kinase involved in a signal transduction pathway that plays a role in yeast cell morphogenesis and cell growth. This pathway seems to start by SMP3; then involve the kinase PKC1 that may act the BCK1 kinase that then phosphorylates MKK1 and MKK2 which themselves phosphorylate the SLT2/MPK1 kinase which itself then phosphorylates and activates the transcription factor RLM1. Directly phosphorylates BCY1 upon TOR complex 1 (TORC1) inhibition. This is Mitogen-activated protein kinase SLT2/MPK1 (SLT2) from Saccharomyces cerevisiae (strain ATCC 204508 / S288c) (Baker's yeast).